A 390-amino-acid polypeptide reads, in one-letter code: F-box/kelch-repeat protein At4g39753 (390 aa).

Residues methionine 1 to serine 16 show a composition bias toward low complexity. The disordered stretch occupies residues methionine 1–proline 33. One can recognise an F-box domain in the interval proline 32 to phenylalanine 79. 4 Kelch repeats span residues proline 139–arginine 192, lysine 193–glycine 243, phenylalanine 245–cysteine 286, and proline 288–threonine 321.

The chain is F-box/kelch-repeat protein At4g39753 from Arabidopsis thaliana (Mouse-ear cress).